Here is a 1075-residue protein sequence, read N- to C-terminus: Error-prone DNA polymerase (1075 aa).

This sequence belongs to the DNA polymerase type-C family. DnaE2 subfamily.

It is found in the cytoplasm. It catalyses the reaction DNA(n) + a 2'-deoxyribonucleoside 5'-triphosphate = DNA(n+1) + diphosphate. DNA polymerase involved in damage-induced mutagenesis and translesion synthesis (TLS). It is not the major replicative DNA polymerase. This is Error-prone DNA polymerase from Ralstonia nicotianae (strain ATCC BAA-1114 / GMI1000) (Ralstonia solanacearum).